A 265-amino-acid chain; its full sequence is GTP cyclohydrolase FolE2 (265 aa).

It belongs to the GTP cyclohydrolase IV family.

The enzyme catalyses GTP + H2O = 7,8-dihydroneopterin 3'-triphosphate + formate + H(+). Its pathway is cofactor biosynthesis; 7,8-dihydroneopterin triphosphate biosynthesis; 7,8-dihydroneopterin triphosphate from GTP: step 1/1. Its function is as follows. Converts GTP to 7,8-dihydroneopterin triphosphate. This is GTP cyclohydrolase FolE2 from Bordetella petrii (strain ATCC BAA-461 / DSM 12804 / CCUG 43448).